A 312-amino-acid chain; its full sequence is Golgi to ER traffic protein 2 (312 aa).

Residues 1-175 (MSDSPSISAE…VQYNTYRHQV (175 aa)) are Cytoplasmic-facing. Residues 176–196 (WKFRFLAVRYFALLANFIYHF) form a helical membrane-spanning segment. Residues 197–224 (YIIGDSISFASSSHQFIRELIPVEPARS) are Lumenal-facing. Residues 225–244 (FFTLFSTIEVVIIASYYFLG) traverse the membrane as a helical segment. Topologically, residues 245–288 (TKEGFFSTATSNNFVVKLLDMGSMVLPQLQQFKTIAVRLLGYYE) are cytoplasmic. Residues 289–309 (LLAVLLGDLSLVVVLFGLHSV) traverse the membrane as a helical segment. Residues 310–312 (LGN) are Lumenal-facing.

Belongs to the GET2 family. In terms of assembly, component of the Golgi to ER traffic (GET) complex, which is composed of GET1, GET2 and GET3. Within the complex, GET1 and GET2 form a heterotetramer which is stabilized by phosphatidylinositol binding and which binds to the GET3 homodimer.

The protein localises to the endoplasmic reticulum membrane. It localises to the golgi apparatus membrane. Its function is as follows. Required for the post-translational delivery of tail-anchored (TA) proteins to the endoplasmic reticulum. Together with GET1, acts as a membrane receptor for soluble GET3, which recognizes and selectively binds the transmembrane domain of TA proteins in the cytosol. The GET complex cooperates with the HDEL receptor ERD2 to mediate the ATP-dependent retrieval of resident ER proteins that contain a C-terminal H-D-E-L retention signal from the Golgi to the ER. This is Golgi to ER traffic protein 2 from Scheffersomyces stipitis (strain ATCC 58785 / CBS 6054 / NBRC 10063 / NRRL Y-11545) (Yeast).